A 347-amino-acid chain; its full sequence is S-adenosylmethionine:tRNA ribosyltransferase-isomerase (347 aa).

The protein belongs to the QueA family. In terms of assembly, monomer.

It is found in the cytoplasm. It catalyses the reaction 7-aminomethyl-7-carbaguanosine(34) in tRNA + S-adenosyl-L-methionine = epoxyqueuosine(34) in tRNA + adenine + L-methionine + 2 H(+). It functions in the pathway tRNA modification; tRNA-queuosine biosynthesis. Functionally, transfers and isomerizes the ribose moiety from AdoMet to the 7-aminomethyl group of 7-deazaguanine (preQ1-tRNA) to give epoxyqueuosine (oQ-tRNA). The sequence is that of S-adenosylmethionine:tRNA ribosyltransferase-isomerase from Streptococcus thermophilus (strain CNRZ 1066).